The sequence spans 2531 residues: MPRLLAPLLCLTLLPALAARGLRCSQPSGTCLNGGRCEVANGTEACVCSGAFVGQRCQDPSPCLSTPCKNAGTCYVVDHGGIVDYACSCPLGFSGPLCLTPLANACLANPCRNGGTCDLLTLTEYKCRCPPGWSGKSCQQADPCASNPCANGGQCLPFESSYICGCPPGFHGPTCRQDVNECSQNPGLCRHGGTCHNEIGSYRCACRATHTGPHCELPYVPCSPSPCQNGGTCRPTGDTTHECACLPGFAGQNCEENVDDCPGNNCKNGGACVDGVNTYNCRCPPEWTGQYCTEDVDECQLMPNACQNGGTCHNSHGGYNCVCVNGWTGEDCSENIDDCASAACFQGATCHDRVASFYCECPHGRTGLLCHLNDACISNPCNEGSNCDTNPVNGKAICTCPSGYTGPACSQDVDECALGANPCEHAGKCLNTLGSFECQCLQGYTGPRCEIDVNECISNPCQNDATCLDQIGEFQCICMPGYEGVYCEINTDECASSPCLHNGRCVDKINEFLCQCPKGFSGHLCQYDVDECASTPCKNGAKCLDGPNTYTCVCTEGYTGTHCEVDIDECDPDPCHYGLCKDGVATFTCLCQPGYTGHHCETNINECHSQPCRHGGTCQDRDNYYLCLCLKGTTGPNCEINLDDCASNPCDSGTCLDKIDGYECACEPGYTGSMCNVNIDECAGSPCHNGGTCEDGIAGFTCRCPEGYHDPTCLSEVNECNSNPCIHGACRDGLNGYKCDCAPGWSGTNCDINNNECESNPCVNGGTCKDMTSGYVCTCREGFSGPNCQTNINECASNPCLNQGTCIDDVAGYKCNCPLPYTGATCEVVLAPCATSPCKNSGVCKESEDYESFSCVCPTGWQGQTCEIDINECVKSPCRHGASCQNTNGSYRCLCQAGYTGRNCESDIDDCRPNPCHNGGSCTDGVNAAFCDCLPGFQGAFCEEDINECASNPCQNGANCTDCVDSYTCTCPTGFNGIHCENNTPDCTESSCFNGGTCVDGINSFTCLCPPGFTGSYCQYDVNECDSRPCLHGGTCQDSYGTYKCTCPQGYTGLNCQNLVRWCDSAPCKNGGKCWQTNTQYHCECRSGWTGFNCDVLSVSCEVAAQKRGIDVTLLCQHGGLCVDEEDKHYCHCQAGYTGSYCEDEVDECSPNPCQNGATCTDYLGGFSCKCVAGYHGSNCSEEINECLSQPCQNGGTCIDLTNTYKCSCPRGTQGVHCEINVDDCHPPLDPASRSPKCFNNGTCVDQVGGYTCTCPPGFVGERCEGDVNECLSNPCDPRGTQNCVQRVNDFHCECRAGHTGRRCESVINGCRGKPCRNGGVCAVASNTARGFICRCPAGFEGATCENDARTCGSLRCLNGGTCISGPRSPTCLCLGSFTGPECQFPASSPCVGSNPCYNQGTCEPTSESPFYRCLCPAKFNGLLCHILDYSFTGGAGRDIPPPQIEEACELPECQEDAGNKVCNLQCNNHACGWDGGDCSLNFNDPWKNCTQSLQCWKYFSDGHCDSQCNSAGCLFDGFDCQLTEGQCNPLYDQYCKDHFSDGHCDQGCNSAECEWDGLDCAEHVPERLAAGTLVLVVLLPPDQLRNNSFHFLRELSHVLHTNVVFKRDAQGQQMIFPYYGREEELRKHPIKRSAVGWATTSLLPGTNGGRQRRELDPMDIHGSIVYLEIDNRQCVQSSSQCFQSATDVAAFLGALASLGSLNIPYKIEAVKSETVEPPLPSQLHLMYVAAAAFVLLFFVGCGVLLSRKRRRQHGQLWFPEGFKVSEASKKKRREPLGEDSVGLKPLKNASDGALMDDNQNEWGDEDLETKKFRFEEPVVLPDLDDQTDHRQWTQQHLDAADLRVSAMAPTPPQGEVDADCMDVNVRGPDGFTPLMIASCSGGGLETGNSEEEEDAPAVISDFIYQGASLHNQTDRTGETALHLAARYSRSDAAKRLLEASADANIQDNMGRTPLHAAVSADAQGVFQILLRNRATDLDARMHDGTTPLILAARLAVEGMLEDLINSHADVNAVDDLGKSALHWAAAVNNVDAAVVLLKNGANKDMQNNKEETPLFLAAREGSYETAKVLLDHFANRDITDHMDRLPRDIAQERMHHDIVRLLDEYNLVRSPQLHGTALGGTPTLSPTLCSPNGYLGNLKSATQGKKARKPSTKGLACSSKEAKDLKARRKKSQDGKGCLLDSSSMLSPVDSLESPHGYLSDVASPPLLPSPFQQSPSMPLSHLPGMPDTHLGISHLNVAAKPEMAALAGGSRLAFEPPPPRLSHLPVASSASTVLSTNGTGAMNFTVGAPASLNGQCEWLPRLQNGMVPSQYNPLRPGVTPGTLSTQAAGLQHGMMGPIHSSLSTNTLSPIIYQGLPNTRLATQPHLVQTQQVQPQNLQIQPQNLQPPSQPHLSVSSAANGHLGRSFLSGEPSQADVQPLGPSSLPVHTILPQESQALPTSLPSSMVPPMTTTQFLTPPSQHSYSSSPVDNTPSHQLQVPEHPFLTPSPESPDQWSSSSPHSNISDWSEGISSPPTSMPSQITHIPEAFK.

Positions 1-18 are cleaved as a signal peptide; sequence MPRLLAPLLCLTLLPALA. At 19–1725 the chain is on the extracellular side; the sequence is ARGLRCSQPS…VEPPLPSQLH (1707 aa). EGF-like domains are found at residues 20 to 58, 59 to 99, 102 to 139, and 140 to 176; these read RGLR…QRCQ, DPSP…PLCL, LANA…KSCQ, and QADP…PTCR. Intrachain disulfides connect Cys24/Cys37, Cys31/Cys46, Cys48/Cys57, Cys63/Cys74, Cys68/Cys87, Cys89/Cys98, Cys106/Cys117, Cys111/Cys127, Cys129/Cys138, Cys144/Cys155, Cys149/Cys164, Cys166/Cys175, Cys182/Cys195, Cys189/Cys204, Cys206/Cys215, Cys222/Cys233, Cys227/Cys243, Cys245/Cys254, Cys261/Cys272, Cys266/Cys281, Cys283/Cys292, Cys299/Cys312, Cys306/Cys321, Cys323/Cys332, Cys339/Cys350, Cys344/Cys359, Cys361/Cys370, Cys376/Cys387, Cys381/Cys398, Cys400/Cys409, Cys416/Cys429, Cys423/Cys438, and Cys440/Cys449. Asn41 carries N-linked (GlcNAc...) asparagine glycosylation. An O-linked (Glc...) serine glycan is attached at Ser65. Residue Thr73 is glycosylated (O-linked (Fuc...) threonine). O-linked (Fuc...) threonine glycosylation occurs at Thr116. Ser146 is a glycosylation site (O-linked (Glc...) serine). An EGF-like 5; calcium-binding domain is found at 178–216; the sequence is DVNECSQNPGLCRHGGTCHNEIGSYRCACRATHTGPHCE. Thr194 carries an O-linked (Fuc...) threonine glycan. Positions 218 to 255 constitute an EGF-like 6 domain; sequence PYVPCSPSPCQNGGTCRPTGDTTHECACLPGFAGQNCE. O-linked (Fuc...) threonine; alternate glycosylation occurs at Thr232. The O-linked (GalNAc...) threonine; alternate glycan is linked to Thr232. The EGF-like 7; calcium-binding domain occupies 257 to 293; the sequence is NVDDCPGNNCKNGGACVDGVNTYNCRCPPEWTGQYCT. The EGF-like 8; calcium-binding domain maps to 295 to 333; that stretch reads DVDECQLMPNACQNGGTCHNSHGGYNCVCVNGWTGEDCS. O-linked (Fuc...) threonine glycosylation is present at Thr311. The region spanning 335–371 is the EGF-like 9; calcium-binding domain; sequence NIDDCASAACFQGATCHDRVASFYCECPHGRTGLLCH. Ser341 is a glycosylation site (O-linked (Glc...) serine). O-linked (Fuc...) threonine glycosylation is present at Thr349. Residues 372 to 410 form the EGF-like 10 domain; it reads LNDACISNPCNEGSNCDTNPVNGKAICTCPSGYTGPACS. An O-linked (Glc...) serine glycan is attached at Ser378. In terms of domain architecture, EGF-like 11; calcium-binding spans 412–450; that stretch reads DVDECALGANPCEHAGKCLNTLGSFECQCLQGYTGPRCE. The interaction with DLL4 stretch occupies residues 420-421; sequence AN. Ca(2+) contacts are provided by Thr432 and Ser435. Ser435 carries O-linked (Glc...) serine glycosylation. Residues 448–452 are interaction with DLL4; it reads RCEID. Ca(2+) is bound by residues Asp452, Val453, and Glu455. Positions 452–488 constitute an EGF-like 12; calcium-binding domain; the sequence is DVNECISNPCQNDATCLDQIGEFQCICMPGYEGVYCE. Disulfide bonds link Cys456/Cys467, Cys461/Cys476, and Cys478/Cys487. Ser458 is a glycosylation site (O-linked (Glc...) serine). An O-linked (Fuc...) threonine glycan is attached at Thr466. Positions 469 and 470 each coordinate Ca(2+). Ca(2+)-binding residues include Asn490, Thr491, and Glu493. Residues 490 to 526 form the EGF-like 13; calcium-binding domain; it reads NTDECASSPCLHNGRCVDKINEFLCQCPKGFSGHLCQ. 75 disulfide bridges follow: Cys494–Cys505, Cys499–Cys514, Cys516–Cys525, Cys532–Cys543, Cys537–Cys552, Cys554–Cys563, Cys570–Cys580, Cys575–Cys589, Cys591–Cys600, Cys607–Cys618, Cys612–Cys627, Cys629–Cys638, Cys645–Cys655, Cys650–Cys664, Cys666–Cys675, Cys682–Cys693, Cys687–Cys702, Cys704–Cys713, Cys720–Cys730, Cys725–Cys739, Cys741–Cys750, Cys757–Cys768, Cys762–Cys777, Cys779–Cys788, Cys795–Cys806, Cys800–Cys815, Cys817–Cys826, Cys833–Cys844, Cys838–Cys855, Cys857–Cys866, Cys873–Cys884, Cys878–Cys893, Cys895–Cys904, Cys911–Cys922, Cys916–Cys931, Cys933–Cys942, Cys949–Cys960, Cys954–Cys969, Cys971–Cys980, Cys987–Cys998, Cys992–Cys1007, Cys1009–Cys1018, Cys1025–Cys1036, Cys1030–Cys1045, Cys1047–Cys1056, Cys1063–Cys1074, Cys1068–Cys1083, Cys1085–Cys1094, Cys1101–Cys1122, Cys1116–Cys1131, Cys1133–Cys1142, Cys1149–Cys1160, Cys1154–Cys1169, Cys1171–Cys1180, Cys1187–Cys1198, Cys1192–Cys1207, Cys1209–Cys1218, Cys1225–Cys1244, Cys1238–Cys1253, Cys1255–Cys1264, Cys1271–Cys1284, Cys1276–Cys1293, Cys1295–Cys1304, Cys1311–Cys1322, Cys1316–Cys1334, Cys1336–Cys1345, Cys1352–Cys1363, Cys1357–Cys1372, Cys1374–Cys1383, Cys1391–Cys1403, Cys1397–Cys1414, Cys1416–Cys1425, Cys1449–Cys1472, Cys1454–Cys1467, and Cys1463–Cys1479. Residue Ser496 is glycosylated (O-linked (Glc...) serine). The Ca(2+) site is built by Asp507 and Lys508. In terms of domain architecture, EGF-like 14; calcium-binding spans 528-564; the sequence is DVDECASTPCKNGAKCLDGPNTYTCVCTEGYTGTHCE. Ser534 is a glycosylation site (O-linked (Glc...) serine). Residues 566 to 601 enclose the EGF-like 15; calcium-binding domain; the sequence is DIDECDPDPCHYGLCKDGVATFTCLCQPGYTGHHCE. The EGF-like 16; calcium-binding domain maps to 603–639; the sequence is NINECHSQPCRHGGTCQDRDNYYLCLCLKGTTGPNCE. Ser609 carries an O-linked (Glc...) serine glycan. The O-linked (Fuc...) threonine glycan is linked to Thr617. Residues 641–676 enclose the EGF-like 17; calcium-binding domain; the sequence is NLDDCASNPCDSGTCLDKIDGYECACEPGYTGSMCN. Ser647 carries O-linked (Glc...) serine glycosylation. Residues 678–714 form the EGF-like 18; calcium-binding domain; sequence NIDECAGSPCHNGGTCEDGIAGFTCRCPEGYHDPTCL. O-linked (Fuc...) threonine glycosylation is present at Thr692. In terms of domain architecture, EGF-like 19; calcium-binding spans 716–751; the sequence is EVNECNSNPCIHGACRDGLNGYKCDCAPGWSGTNCD. A glycan (O-linked (Glc...) serine) is linked at Ser722. In terms of domain architecture, EGF-like 20; calcium-binding spans 753 to 789; sequence NNNECESNPCVNGGTCKDMTSGYVCTCREGFSGPNCQ. Ser759 carries O-linked (Glc...) serine glycosylation. A glycan (O-linked (Fuc...) threonine) is linked at Thr767. The O-linked (GlcNAc) serine glycan is linked to Ser784. The region spanning 791–827 is the EGF-like 21; calcium-binding domain; that stretch reads NINECASNPCLNQGTCIDDVAGYKCNCPLPYTGATCE. Residue Ser797 is glycosylated (O-linked (Glc...) serine). O-linked (Fuc...) threonine glycosylation is present at Thr805. In terms of domain architecture, EGF-like 22 spans 829-867; that stretch reads VLAPCATSPCKNSGVCKESEDYESFSCVCPTGWQGQTCE. Positions 869–905 constitute an EGF-like 23; calcium-binding domain; that stretch reads DINECVKSPCRHGASCQNTNGSYRCLCQAGYTGRNCE. N-linked (GlcNAc...) asparagine glycosylation occurs at Asn888. The O-linked (GlcNAc) threonine glycan is linked to Thr900. Residues 907–943 form the EGF-like 24 domain; sequence DIDDCRPNPCHNGGSCTDGVNAAFCDCLPGFQGAFCE. Residue Ser921 is glycosylated (O-linked (Fuc) serine). The region spanning 945–981 is the EGF-like 25; calcium-binding domain; that stretch reads DINECASNPCQNGANCTDCVDSYTCTCPTGFNGIHCE. A glycan (O-linked (Glc...) serine) is linked at Ser951. N-linked (GlcNAc...) asparagine glycosylation is present at Asn959. One can recognise an EGF-like 26 domain in the interval 983–1019; it reads NTPDCTESSCFNGGTCVDGINSFTCLCPPGFTGSYCQ. Residue Thr997 is glycosylated (O-linked (Fuc...) threonine). The region spanning 1021-1057 is the EGF-like 27; calcium-binding domain; it reads DVNECDSRPCLHGGTCQDSYGTYKCTCPQGYTGLNCQ. Ser1027 carries an O-linked (Glc...) serine glycan. Thr1035 carries O-linked (Fuc...) threonine glycosylation. EGF-like domains are found at residues 1059 to 1095 and 1097 to 1143; these read LVRW…FNCD and LSVS…SYCE. O-linked (Glc...) serine glycosylation is present at Ser1065. The region spanning 1145 to 1181 is the EGF-like 30; calcium-binding domain; sequence EVDECSPNPCQNGATCTDYLGGFSCKCVAGYHGSNCS. The O-linked (Fuc...) threonine glycan is linked to Thr1159. Asn1179 is a glycosylation site (N-linked (GlcNAc...) asparagine). Positions 1183 to 1219 constitute an EGF-like 31; calcium-binding domain; sequence EINECLSQPCQNGGTCIDLTNTYKCSCPRGTQGVHCE. A glycan (O-linked (Glc...) serine) is linked at Ser1189. Thr1197 carries an O-linked (Fuc...) threonine glycan. Residues 1221–1265 form the EGF-like 32; calcium-binding domain; sequence NVDDCHPPLDPASRSPKCFNNGTCVDQVGGYTCTCPPGFVGERCE. The N-linked (GlcNAc...) asparagine glycan is linked to Asn1241. EGF-like domains follow at residues 1267–1305, 1307–1346, 1348–1384, and 1387–1426; these read DVNE…RRCE, VING…ATCE, DART…PECQ, and ASSP…LLCH. O-linked (Glc...) serine glycosylation is present at Ser1273. Thr1362 is a glycosylation site (O-linked (Fuc...) threonine). Thr1379 is a glycosylation site (O-linked (GlcNAc...) threonine). Thr1402 is a glycosylation site (O-linked (Fuc...) threonine; alternate). An O-linked (GalNAc...) threonine; alternate glycan is attached at Thr1402. 3 LNR repeats span residues 1449–1489, 1490–1531, and 1532–1571; these read CELP…PWKN, CTQS…CNPL, and YDQY…RLAA. Asp1457, Asn1460, Asp1475, and Asp1478 together coordinate Ca(2+). A glycan (N-linked (GlcNAc...) asparagine) is linked at Asn1489. 5 disulfides stabilise this stretch: Cys1490-Cys1514, Cys1496-Cys1509, Cys1505-Cys1521, Cys1536-Cys1549, and Cys1545-Cys1561. An N-linked (GlcNAc...) asparagine glycan is attached at Asn1587. Thr1715 is a glycosylation site (O-linked (GalNAc...) threonine). The interval 1718-1750 is interaction with PSEN1; sequence PPLPSQLHLMYVAAAAFVLLFFVGCGVLLSRKR. The chain crosses the membrane as a helical span at residues 1726-1746; it reads LMYVAAAAFVLLFFVGCGVLL. The Cytoplasmic portion of the chain corresponds to 1747 to 2531; that stretch reads SRKRRRQHGQ…QITHIPEAFK (785 aa). Residue Lys1749 forms a Glycyl lysine isopeptide (Lys-Gly) (interchain with G-Cter in ubiquitin) linkage. The tract at residues 1770–1798 is disordered; it reads KKKRREPLGEDSVGLKPLKNASDGALMDD. Position 1851 is a phosphothreonine (Thr1851). 5 ANK repeats span residues 1917 to 1946, 1950 to 1980, 1984 to 2013, 2017 to 2046, and 2050 to 2079; these read TGET…DANI, MGRT…DLDA, DGTT…DVNA, LGKS…NKDM, and KEET…NRDI. Residues 1937–1945 are HIF1AN-binding; the sequence is LLEASADAN. The residue at position 1945 (Asn1945) is a (3S)-3-hydroxyasparagine; by HIF1AN. The tract at residues 2004–2012 is HIF1AN-binding; sequence LINSHADVN. Asn2012 is subject to (3S)-3-hydroxyasparagine; by HIF1AN. 3 disordered regions span residues 2141–2185, 2382–2428, and 2440–2531; these read SATQ…DSSS, QPQN…SLPV, and PTSL…EAFK. Residues 2382–2395 are compositionally biased toward low complexity; it reads QPQNLQPPSQPHLS. Residues 2440–2478 are compositionally biased toward polar residues; the sequence is PTSLPSSMVPPMTTTQFLTPPSQHSYSSSPVDNTPSHQL. The span at 2488-2503 shows a compositional bias: low complexity; the sequence is PSPESPDQWSSSSPHS. Residues 2504–2524 show a composition bias toward polar residues; the sequence is NISDWSEGISSPPTSMPSQIT.

This sequence belongs to the NOTCH family. As to quaternary structure, heterodimer of a C-terminal fragment N(TM) and an N-terminal fragment N(EC) which are probably linked by disulfide bonds. Interacts with DNER, DTX1, DTX2 and RBPJ/RBPSUH. Also interacts with MAML1, MAML2 and MAML3 which act as transcriptional coactivators for NOTCH1. Notch 1 intracellular domain interacts with SNW1; the interaction involves multimerized NOTCH1 NICD and is implicated in a formation of an intermediate preactivation complex which associates with DNA-bound CBF-1/RBPJ. The activated membrane-bound form interacts with AAK1 which promotes NOTCH1 stabilization. Forms a trimeric complex with FBXW7 and SGK1. Interacts with HIF1AN. HIF1AN negatively regulates the function of notch intracellular domain (NICD), accelerating myogenic differentiation. Interacts (via NICD) with SNAI1 (via zinc fingers); the interaction induces SNAI1 degradation via MDM2-mediated ubiquitination and inhibits SNAI1-induced cell invasion. Interacts (via NICD) with MDM2A. Interacts (via NICD) with BCL6; the interaction decreases MAML1 recruitment by NOTCH1 NICD on target genes DNA and inhibits NOTCH1 transactivation activity. Interacts with THBS4. Interacts (via the EGF-like repeat region) with CCN3 (via CTCK domain). Interacts (via EGF-like domains) with DLL4 (via N-terminal DSL and MNNL domains). Interacts with ZMIZ1. Interacts (via NICD domain) with MEGF10 (via the cytoplasmic domain). Interacts with DLL1 and JAG1. Interacts (via NICD domain) with PRAG1. Forms a complex with PRAG1, N1ICD and MAML1, in a MAML1-dependent manner. Interacts (via transmembrane region) with PSEN1; the interaction is direct. Interacts with ZFP64. Post-translationally, synthesized in the endoplasmic reticulum as an inactive form which is proteolytically cleaved by a furin-like convertase in the trans-Golgi network before it reaches the plasma membrane to yield an active, ligand-accessible form. Cleavage results in a C-terminal fragment N(TM) and a N-terminal fragment N(EC). Following ligand binding, it is cleaved by ADAM17 to yield a membrane-associated intermediate fragment called notch extracellular truncation (NEXT). Following endocytosis, this fragment is then cleaved by one of the catalytic subunits of gamma-secretase (PSEN1 or PSEN2) to release a Notch-derived peptide containing the intracellular domain (NICD) from the membrane. In terms of processing, phosphorylated. O-glycosylated on the EGF-like domains. O-glucosylated at Ser-435 by KDELC1 and KDELC2. Contains both O-linked fucose and O-linked glucose in the EGF-like domains 11, 12 and 13, which are interacting with the residues on DLL4. O-linked glycosylation by GALNT11 is involved in determination of left/right symmetry: glycosylation promotes activation of NOTCH1, possibly by promoting cleavage by ADAM17, modulating the balance between motile and immotile (sensory) cilia at the left-right organiser (LRO). MFNG-, RFNG- and LFNG-mediated modification of O-fucose residues at specific EGF-like domains results in inhibition of its activation by JAG1 and enhancement of its activation by DLL1 via an increased binding to DLL1. Post-translationally, ubiquitinated. Undergoes 'Lys-29'-linked polyubiquitination by ITCH; promotes the lysosomal degradation of non-activated internalized NOTCH1. Deubiquitination by USP12 is required for transport of internalized non-activated receptor from late endosomes to lysosomes for degradation. Monoubiquitination at Lys-1749 is required for activation by gamma-secretase cleavage, it promotes interaction with AAK1, which stabilizes it. Deubiquitination by EIF3F is necessary for nuclear import of activated Notch. In terms of processing, hydroxylated at Asn-1945 and Asn-2012 by HIF1AN. Hydroxylation reduces affinity for HI1AN and may thus indirectly modulate negative regulation of NICD. As to expression, expressed in the brain, kidney and spleen. Expressed in postnatal central nervous system (CNS) germinal zones and, in early postnatal life, within numerous cells throughout the CNS. Found in both subventricular and ventricular germinal zones.

The protein resides in the cell membrane. The protein localises to the late endosome membrane. It localises to the nucleus. Its function is as follows. Functions as a receptor for membrane-bound ligands Jagged-1 (JAG1), Jagged-2 (JAG2) and Delta-1 (DLL1) to regulate cell-fate determination. Upon ligand activation through the released notch intracellular domain (NICD) it forms a transcriptional activator complex with RBPJ/RBPSUH and activates genes of the enhancer of split locus. Affects the implementation of differentiation, proliferation and apoptotic programs. Involved in angiogenesis; negatively regulates endothelial cell proliferation and migration and angiogenic sprouting. Involved in the maturation of both CD4(+) and CD8(+) cells in the thymus. Important for follicular differentiation and possibly cell fate selection within the follicle. During cerebellar development, functions as a receptor for neuronal DNER and is involved in the differentiation of Bergmann glia. Represses neuronal and myogenic differentiation. May play an essential role in postimplantation development, probably in some aspect of cell specification and/or differentiation. May be involved in mesoderm development, somite formation and neurogenesis. May enhance HIF1A function by sequestering HIF1AN away from HIF1A. Required for the THBS4 function in regulating protective astrogenesis from the subventricular zone (SVZ) niche after injury. Involved in determination of left/right symmetry by modulating the balance between motile and immotile (sensory) cilia at the left-right organiser (LRO). This chain is Neurogenic locus notch homolog protein 1 (Notch1), found in Rattus norvegicus (Rat).